A 234-amino-acid polypeptide reads, in one-letter code: Protein spitz (234 aa).

The first 28 residues, Met1–Ala28, serve as a signal peptide directing secretion. Topologically, residues Cys29–Ser143 are lumenal. The disordered stretch occupies residues Thr33 to Pro71. A compositionally biased stretch (low complexity) spans Pro56 to Pro71. Asn74 is a glycosylation site (N-linked (GlcNAc...) asparagine). Residues Pro78–Glu122 form the EGF-like domain. Disulfide bonds link Cys82/Cys97, Cys91/Cys110, and Cys112/Cys121. Residues Ile144–Leu164 form a helical membrane-spanning segment. At Arg165 to Leu234 the chain is on the cytoplasmic side.

Interacts with Star via the lumenal domain. In terms of processing, proteolytic processing by Rhomboid occurs in the Golgi. Cleavage takes place within the transmembrane domain close to residue 144 and the active growth factor is released. N-glycosylated and O-glycosylated. Expressed throughout the embryo.

Its subcellular location is the cell membrane. It is found in the endoplasmic reticulum membrane. It localises to the golgi apparatus membrane. Ligand for the EGF receptor (Gurken). Involved in a number of unrelated developmental choices, for example, dorsal-ventral axis formation, glial migration, sensory organ determination, and muscle development. It is required for photoreceptor determination. The sequence is that of Protein spitz (spi) from Drosophila melanogaster (Fruit fly).